A 516-amino-acid polypeptide reads, in one-letter code: GMP synthase [glutamine-hydrolyzing] (516 aa).

The Glutamine amidotransferase type-1 domain occupies 8–198; sequence KILILDFGSQ…VVNICGCDTL (191 aa). Residue Cys84 is the Nucleophile of the active site. Active-site residues include His172 and Glu174. The GMPS ATP-PPase domain occupies 199-391; it reads WNIENIIEND…LGLPYNMLYR (193 aa). 226 to 232 contacts ATP; it reads SGGVDSS.

Homodimer.

The catalysed reaction is XMP + L-glutamine + ATP + H2O = GMP + L-glutamate + AMP + diphosphate + 2 H(+). The protein operates within purine metabolism; GMP biosynthesis; GMP from XMP (L-Gln route): step 1/1. Catalyzes the synthesis of GMP from XMP. This Francisella tularensis subsp. mediasiatica (strain FSC147) protein is GMP synthase [glutamine-hydrolyzing].